The sequence spans 849 residues: Villin-1 (849 aa).

5 Gelsolin-like repeats span residues 30-107 (IEKS…DKFL), 147-213 (RVTE…EDGK), 262-335 (VPVE…TVEF), 405-475 (QEQL…PEMF), and 527-566 (AIQV…DHNL). The tract at residues 739-849 (ETPERSLRKS…AVATGTPRRR (111 aa)) is disordered. Low complexity-rich tracts occupy residues 747–782 (KSSS…SAST) and 791–823 (PAAL…STPS).

This sequence belongs to the villin/gelsolin family. In terms of tissue distribution, expressed in roots, young leaves, and inflorescences, mostly in the vasculature of roots, leaves, and filaments of the anthers. Also detected in guard cells.

It localises to the cytoplasm. The protein resides in the cytoskeleton. Functionally, ca(2+)-independent actin-binding protein. Binds actin microfilaments (MFs). Involved in actin filament bundling, severing and capping. Caps the barbed end of actin filaments and protects them from disassembly. Promotes VLN3-mediated MF severing. In Oryza sativa subsp. japonica (Rice), this protein is Villin-1.